The chain runs to 146 residues: Small ribosomal subunit protein uS5 (146 aa).

The S5 DRBM domain maps to phenylalanine 8 to valine 71.

It belongs to the universal ribosomal protein uS5 family. Part of the 30S ribosomal subunit. Contacts proteins S4 and S8.

In terms of biological role, with S4 and S12 plays an important role in translational accuracy. Located at the back of the 30S subunit body where it stabilizes the conformation of the head with respect to the body. The protein is Small ribosomal subunit protein uS5 of Aliarcobacter butzleri (strain RM4018) (Arcobacter butzleri).